The following is a 288-amino-acid chain: 2-hydroxy-6-oxononadienedioate/2-hydroxy-6-oxononatrienedioate hydrolase (288 aa).

Residues 38–273 (VVLLHGSGPG…DCGHWAQWEH (236 aa)) form the AB hydrolase-1 domain. The Proton acceptor role is filled by His267.

The protein belongs to the AB hydrolase superfamily. MhpC family. In terms of assembly, homodimer.

The catalysed reaction is (2Z,4E)-2-hydroxy-6-oxonona-2,4-dienedioate + H2O = (2Z)-2-hydroxypenta-2,4-dienoate + succinate + H(+). It catalyses the reaction (2Z,4E,7E)-2-hydroxy-6-oxonona-2,4,7-trienedioate + H2O = (2Z)-2-hydroxypenta-2,4-dienoate + fumarate + H(+). It functions in the pathway aromatic compound metabolism; 3-phenylpropanoate degradation. In terms of biological role, catalyzes the cleavage of the C5-C6 bond of 2-hydroxy-6-oxononadienedioate and 2-hydroxy-6-oxononatrienedioate, a dienol ring fission product of the bacterial meta-cleavage pathway for degradation of phenylpropionic acid. The protein is 2-hydroxy-6-oxononadienedioate/2-hydroxy-6-oxononatrienedioate hydrolase of Escherichia coli O139:H28 (strain E24377A / ETEC).